The following is a 587-amino-acid chain: F-box/WD repeat-containing protein sel-10 (587 aa).

Residues 1–11 (MWPRNDVHMDD) show a composition bias toward basic and acidic residues. Residues 1–53 (MWPRNDVHMDDGSMTPEDQEPVTDNDMEYNDNGEESSYSNGSSSSYNADKLSS) are disordered. The segment covering 17-34 (EDQEPVTDNDMEYNDNGE) has biased composition (acidic residues). Residues 35–47 (ESSYSNGSSSSYN) show a composition bias toward low complexity. An F-box domain is found at 121–167 (RDFLSCLPVELGMKILHNLTGYDLLKVAQVSKNWKLISEIDKIWKSL). 7 WD repeats span residues 253-291 (GHED…VMYT), 294-333 (GHTG…LLHT), 336-373 (GHTS…HLAT), 376-415 (GHHA…RTLT), 416-455 (GHNN…GQEC), 461-498 (GHTS…CVHM), and 501-539 (GHRS…LIRD).

Probable component of the SCF(sel-10) E3 ubiquitin-protein ligase complex which includes skr-1 and F-box domain-containing protein sel-10 as a substrate recognition component. Interacts with fem-1, fem-2, and fem-3. Interacts with the intracellular domain of glp-1 and sel-12. Interacts with lin-12. Interacts with skr-1. Interacts with zyg-1. As to expression, expressed in tail and head neurons.

It localises to the cell projection. The protein resides in the axon. Its subcellular location is the cytoplasm. Probable substrate recognition component of SCF (SKP1-CUL-F-box protein) E3 ubiquitin-protein ligase complex, which mediates the ubiquitination and subsequent proteasomal degradation of target proteins. Regulates synapse elimination in early development in the motor neuron HSNL. Cell autonomous negative regulator of lin-12/Notch-mediated signaling, with respect to lin-12 activity in cell fate decisions and tumorigenesis. May target the intracellular domains of lin-12/Notch proteins for ubiquitin-dependent degradation. Involved in sex determination by promoting female development. Potential regulator of presenilin. May have a role in egg laying. Regulates zyg-1 levels (possibly redundantly with lin-23) to control centrosome duplication during mitosis. Negatively regulates lin-45 activity and protein stability, probably by targeting it for ubiquitination and proteasomal degradation. The sequence is that of F-box/WD repeat-containing protein sel-10 from Caenorhabditis elegans.